Consider the following 107-residue polypeptide: SH3 domain-binding glutamic acid-rich-like protein 2 (107 aa).

The SH3-binding motif lies at 61 to 67 (QGNPLPP).

Belongs to the SH3BGR family. Highly expressed in brain, placenta, liver and kidney. Expressed in retina.

Its subcellular location is the nucleus. In Homo sapiens (Human), this protein is SH3 domain-binding glutamic acid-rich-like protein 2 (SH3BGRL2).